Here is a 426-residue protein sequence, read N- to C-terminus: Tol-Pal system protein TolB (426 aa).

The signal sequence occupies residues 1 to 24 (MKLKSRYTSLISVVSIFFSSMVMA).

Belongs to the TolB family. In terms of assembly, the Tol-Pal system is composed of five core proteins: the inner membrane proteins TolA, TolQ and TolR, the periplasmic protein TolB and the outer membrane protein Pal. They form a network linking the inner and outer membranes and the peptidoglycan layer.

The protein localises to the periplasm. Functionally, part of the Tol-Pal system, which plays a role in outer membrane invagination during cell division and is important for maintaining outer membrane integrity. The protein is Tol-Pal system protein TolB of Haemophilus ducreyi (strain 35000HP / ATCC 700724).